Consider the following 377-residue polypeptide: Trichodiene synthase (377 aa).

The protein belongs to the trichodiene synthase family.

It catalyses the reaction (2E,6E)-farnesyl diphosphate = trichodiene + diphosphate. It functions in the pathway sesquiterpene biosynthesis; trichothecene biosynthesis. TS is a member of the terpene cyclase group of enzymes. It catalyzes the isomerization and cyclization of farnesyl pyro-phosphate to form trichodiene, the first cyclic intermediate in the biosynthetic pathway for trichothecenes. It serves to branch trichothecene biosynthesis from the isoprenoid pathway. This chain is Trichodiene synthase (TRI5), found in Fusarium poae.